Here is a 359-residue protein sequence, read N- to C-terminus: 3-dehydroquinate synthase (359 aa).

NAD(+) contacts are provided by residues 71 to 76 (DGEQYK), 104 to 108 (GVVGD), 128 to 129 (TT), Lys141, Lys150, and 168 to 171 (TLNT). Glu183, His247, and His264 together coordinate Zn(2+).

It belongs to the sugar phosphate cyclases superfamily. Dehydroquinate synthase family. It depends on Co(2+) as a cofactor. Zn(2+) is required as a cofactor. NAD(+) serves as cofactor.

It is found in the cytoplasm. The enzyme catalyses 7-phospho-2-dehydro-3-deoxy-D-arabino-heptonate = 3-dehydroquinate + phosphate. It participates in metabolic intermediate biosynthesis; chorismate biosynthesis; chorismate from D-erythrose 4-phosphate and phosphoenolpyruvate: step 2/7. Catalyzes the conversion of 3-deoxy-D-arabino-heptulosonate 7-phosphate (DAHP) to dehydroquinate (DHQ). This Coxiella burnetii (strain Dugway 5J108-111) protein is 3-dehydroquinate synthase.